The primary structure comprises 398 residues: ATP-dependent RNA helicase eIF4A (398 aa).

Positions aspartate 25 to glutamine 53 match the Q motif motif. Residues isoleucine 56–isoleucine 226 enclose the Helicase ATP-binding domain. Alanine 69–threonine 76 lines the ATP pocket. The DEAD box motif lies at aspartate 174–aspartate 177. Residues glycine 237–isoleucine 398 form the Helicase C-terminal domain.

Belongs to the DEAD box helicase family. eIF4A subfamily. In terms of assembly, component of the eIF4F complex, which composition varies with external and internal environmental conditions. It is composed of at least eIF4A, eIF4E and eIF4G.

The protein localises to the cytoplasm. It catalyses the reaction ATP + H2O = ADP + phosphate + H(+). Functionally, ATP-dependent RNA helicase which is a subunit of the eIF4F complex involved in cap recognition and is required for mRNA binding to ribosome. In the current model of translation initiation, eIF4A unwinds RNA secondary structures in the 5'-UTR of mRNAs which is necessary to allow efficient binding of the small ribosomal subunit, and subsequent scanning for the initiator codon. This chain is ATP-dependent RNA helicase eIF4A (tif1), found in Botryotinia fuckeliana (strain B05.10) (Noble rot fungus).